A 404-amino-acid polypeptide reads, in one-letter code: Queuine tRNA-ribosyltransferase catalytic subunit (404 aa).

D98 (proton acceptor) is an active-site residue. Residues 98–102 (DSGGF), D152, Q195, and G222 each bind substrate. An RNA binding region spans residues 253-259 (GVGYAED). The Nucleophile role is filled by D272. Positions 277–281 (TRTAR) are RNA binding; important for wobble base 34 recognition. The Zn(2+) site is built by C310, C312, C315, and H347.

Belongs to the queuine tRNA-ribosyltransferase family. Heterodimer of a catalytic subunit and an accessory subunit. It depends on Zn(2+) as a cofactor.

It is found in the cytoplasm. The protein resides in the nucleus. The enzyme catalyses guanosine(34) in tRNA + queuine = queuosine(34) in tRNA + guanine. Functionally, catalytic subunit of the queuine tRNA-ribosyltransferase (TGT) that catalyzes the base-exchange of a guanine (G) residue with queuine (Q) at position 34 (anticodon wobble position) in tRNAs with GU(N) anticodons (tRNA-Asp, -Asn, -His and -Tyr), resulting in the hypermodified nucleoside queuosine (7-(((4,5-cis-dihydroxy-2-cyclopenten-1-yl)amino)methyl)-7-deazaguanosine). Catalysis occurs through a double-displacement mechanism. The nucleophile active site attacks the C1' of nucleotide 34 to detach the guanine base from the RNA, forming a covalent enzyme-RNA intermediate. The proton acceptor active site deprotonates the incoming queuine, allowing a nucleophilic attack on the C1' of the ribose to form the product. The sequence is that of Queuine tRNA-ribosyltransferase catalytic subunit from Schizosaccharomyces pombe (strain 972 / ATCC 24843) (Fission yeast).